The primary structure comprises 561 residues: DNA ligase B (561 aa).

Lys-125 functions as the N6-AMP-lysine intermediate in the catalytic mechanism.

It belongs to the NAD-dependent DNA ligase family. LigB subfamily.

It carries out the reaction NAD(+) + (deoxyribonucleotide)n-3'-hydroxyl + 5'-phospho-(deoxyribonucleotide)m = (deoxyribonucleotide)n+m + AMP + beta-nicotinamide D-nucleotide.. Functionally, catalyzes the formation of phosphodiester linkages between 5'-phosphoryl and 3'-hydroxyl groups in double-stranded DNA using NAD as a coenzyme and as the energy source for the reaction. In Salmonella arizonae (strain ATCC BAA-731 / CDC346-86 / RSK2980), this protein is DNA ligase B.